We begin with the raw amino-acid sequence, 533 residues long: Sterol 26-hydroxylase, mitochondrial (533 aa).

The transit peptide at 1 to 32 (MAVLSRMRLRWALLDTRVMGHGLCPQGARAKA) directs the protein to the mitochondrion. Residues 38-58 (LRDHESTEGPGTGQDRPRLRS) form a disordered region. Lysine 142 and lysine 375 each carry N6-acetyllysine. A sterol-binding region spans residues 386-400 (PLLKAVIKETLRLYP). Heme is bound at residue cysteine 479. N6-acetyllysine is present on residues lysine 512 and lysine 523.

Belongs to the cytochrome P450 family. Interacts with HSP70; this interaction is required for initial targeting to mitochondria. Requires heme as cofactor. As to expression, expressed in liver, kidney and ovary.

Its subcellular location is the mitochondrion inner membrane. It catalyses the reaction 5beta-cholestane-3alpha,7alpha,12alpha-triol + 6 reduced [adrenodoxin] + 3 O2 + 5 H(+) = (25R)-3alpha,7alpha,12alpha-trihydroxy-5beta-cholestan-26-oate + 6 oxidized [adrenodoxin] + 4 H2O. The enzyme catalyses cholestanol + 2 reduced [adrenodoxin] + O2 + 2 H(+) = (25R)-26-hydroxycholestanol + 2 oxidized [adrenodoxin] + H2O. It carries out the reaction (25R)-3beta-hydroxycholest-5-en-7-one-26-al + 2 reduced [adrenodoxin] + O2 + H(+) = (25R)-3beta-hydroxycholest-5-en-7-one-26-oate + 2 oxidized [adrenodoxin] + H2O. The catalysed reaction is (25R)-3beta,26-dihydroxycholest-5-en-7-one + 2 reduced [adrenodoxin] + O2 + 2 H(+) = (25R)-3beta-hydroxycholest-5-en-7-one-26-al + 2 oxidized [adrenodoxin] + 2 H2O. It catalyses the reaction 7-oxocholesterol + 2 reduced [adrenodoxin] + O2 + 2 H(+) = (25R)-3beta,26-dihydroxycholest-5-en-7-one + 2 oxidized [adrenodoxin] + H2O. The enzyme catalyses calciol + 2 reduced [adrenodoxin] + O2 + 2 H(+) = calcidiol + 2 oxidized [adrenodoxin] + H2O. It carries out the reaction (25R)-5beta-cholestane-3alpha,7alpha,12alpha,26-tetrol + 2 reduced [adrenodoxin] + O2 + 2 H(+) = (25R)-3alpha,7alpha,12alpha-trihydroxy-5beta-cholestan-26-al + 2 oxidized [adrenodoxin] + 2 H2O. The catalysed reaction is 2 reduced [adrenodoxin] + cholesterol + O2 + 2 H(+) = (25R)-cholest-5-ene-3beta,26-diol + 2 oxidized [adrenodoxin] + H2O. It catalyses the reaction (25R)-3beta,4beta-dihydroxycholest-5-en-26-al + 2 reduced [adrenodoxin] + O2 + H(+) = (25R)-3beta,4beta-dihydroxycholest-5-en-26-oate + 2 oxidized [adrenodoxin] + H2O. The enzyme catalyses (25R)-4beta,26-dihydroxycholesterol + 2 reduced [adrenodoxin] + O2 + 2 H(+) = (25R)-3beta,4beta-dihydroxycholest-5-en-26-al + 2 oxidized [adrenodoxin] + 2 H2O. It carries out the reaction 4beta-hydroxycholesterol + 2 reduced [adrenodoxin] + O2 + 2 H(+) = (25R)-4beta,26-dihydroxycholesterol + 2 oxidized [adrenodoxin] + H2O. The catalysed reaction is (25R)-3beta-hydroxy-5-cholesten-26-al + 2 reduced [adrenodoxin] + O2 + H(+) = (25R)-3beta-hydroxy-5-cholestenoate + 2 oxidized [adrenodoxin] + H2O. It catalyses the reaction (25R)-cholest-5-ene-3beta,26-diol + 2 reduced [adrenodoxin] + O2 + 2 H(+) = (25R)-3beta-hydroxy-5-cholesten-26-al + 2 oxidized [adrenodoxin] + 2 H2O. The enzyme catalyses (25R)-3alpha,7alpha,12alpha-trihydroxy-5beta-cholestan-26-al + 2 reduced [adrenodoxin] + O2 + H(+) = (25R)-3alpha,7alpha,12alpha-trihydroxy-5beta-cholestan-26-oate + 2 oxidized [adrenodoxin] + H2O. It carries out the reaction 5beta-cholestane-3alpha,7alpha,12alpha-triol + 2 reduced [adrenodoxin] + O2 + 2 H(+) = (25R)-5beta-cholestane-3alpha,7alpha,12alpha,26-tetrol + 2 oxidized [adrenodoxin] + H2O. It functions in the pathway hormone biosynthesis; cholecalciferol biosynthesis. The protein operates within steroid metabolism; cholesterol degradation. It participates in lipid metabolism; bile acid biosynthesis. Cytochrome P450 monooxygenase that catalyzes regio- and stereospecific hydroxylation of cholesterol and its derivatives. Hydroxylates (with R stereochemistry) the terminal methyl group of cholesterol side-chain in a three step reaction to yield at first a C26 alcohol, then a C26 aldehyde and finally a C26 acid. Regulates cholesterol homeostasis by catalyzing the conversion of excess cholesterol to bile acids via both the 'neutral' (classic) and the 'acid' (alternative) pathways. May also regulate cholesterol homeostasis via generation of active oxysterols, which act as ligands for NR1H2 and NR1H3 nuclear receptors, modulating the transcription of genes involved in lipid metabolism. Plays a role in cholestanol metabolism in the cerebellum. Similarly to cholesterol, hydroxylates cholestanol and may facilitate sterol diffusion through the blood-brain barrier to the systemic circulation for further degradation. Also hydroxylates retinal 7-ketocholesterol, a noxious oxysterol with pro-inflammatory and pro-apoptotic effects, and may play a role in its elimination from the retinal pigment epithelium. May play a redundant role in vitamin D biosynthesis. Catalyzes 25-hydroxylation of vitamin D3 that is required for its conversion to a functionally active form. In Rattus norvegicus (Rat), this protein is Sterol 26-hydroxylase, mitochondrial (Cyp27a1).